The following is a 462-amino-acid chain: Sodium-coupled neutral amino acid transporter 7 (462 aa).

Residue Ser28 is modified to Phosphoserine. 11 consecutive transmembrane segments (helical) span residues 56–76 (AIFI…PAAF), 82–102 (VAAG…GLVI), 130–150 (LCEV…LIII), 178–198 (FTIS…REIG), 205–225 (FLSV…YIWP), 239–259 (ASWM…QCHV), 282–302 (AAMV…FLTF), 319–339 (MAVA…YPIL), 371–391 (VLQT…IPDI), 395–415 (ISVI…LCLI), and 428–448 (ASWW…AFIF).

The protein belongs to the amino acid/polyamine transporter 2 family. In terms of assembly, interacts with the mTORC1 complex; this interaction mediates the recruitment of mTORC1 to the lysosome and its subsequent activation.

Its subcellular location is the lysosome membrane. It localises to the cell projection. The protein localises to the axon. It catalyses the reaction L-asparagine(in) + Na(+)(in) = L-asparagine(out) + Na(+)(out). It carries out the reaction L-glutamine(in) + Na(+)(in) = L-glutamine(out) + Na(+)(out). Functionally, symporter that selectively cotransports sodium ions and amino acids, such as L-glutamine and L-asparagine from the lysosome into the cytoplasm and may participates in mTORC1 activation. The transport activity requires an acidic lysosomal lumen. This chain is Sodium-coupled neutral amino acid transporter 7, found in Homo sapiens (Human).